We begin with the raw amino-acid sequence, 301 residues long: Ribonuclease Z (301 aa).

Positions 63, 65, 67, 68, 141, 204, and 262 each coordinate Zn(2+). D67 (proton acceptor) is an active-site residue.

The protein belongs to the RNase Z family. Homodimer. Requires Zn(2+) as cofactor.

It carries out the reaction Endonucleolytic cleavage of RNA, removing extra 3' nucleotides from tRNA precursor, generating 3' termini of tRNAs. A 3'-hydroxy group is left at the tRNA terminus and a 5'-phosphoryl group is left at the trailer molecule.. Zinc phosphodiesterase, which displays some tRNA 3'-processing endonuclease activity. Probably involved in tRNA maturation, by removing a 3'-trailer from precursor tRNA. This is Ribonuclease Z from Streptomyces coelicolor (strain ATCC BAA-471 / A3(2) / M145).